Reading from the N-terminus, the 356-residue chain is Icosanoyl-CoA 5-desaturase (356 aa).

Residues 5–25 traverse the membrane as a helical segment; the sequence is LYFPISISLSLSLEAMASFIA. Positions 38–58 are disordered; that stretch reads LDPKIPTKPEPKTETPKPKDD. Residues 42-58 show a composition bias toward basic and acidic residues; that stretch reads IPTKPEPKTETPKPKDD. Helical transmembrane passes span 88–108 and 111–131; these read NAVT…YFSW and FWIS…TLCF. Positions 132–137 match the Histidine box-1 motif; it reads HRCLTH. The Histidine box-2 signature appears at 169-173; that stretch reads HRYHH. A helical membrane pass occupies residues 236–256; it reads ALIALLYYVGGFPYIVWGMGF. Positions 302–306 match the Histidine box-3 motif; the sequence is HNNHH.

Belongs to the fatty acid desaturase type 1 family. It depends on Fe(2+) as a cofactor.

The protein localises to the membrane. The enzyme catalyses eicosanoyl-CoA + 2 Fe(II)-[cytochrome b5] + O2 + 2 H(+) = (5Z)-eicosenoyl-CoA + 2 Fe(III)-[cytochrome b5] + 2 H2O. It functions in the pathway lipid metabolism; monounsaturated fatty acid biosynthesis. Desaturase involved in the biosynthesis of (5Z)-icos-5-enoate, an unusual monounsaturated fatty acid that makes up to 60% of the total fatty acids in Limnanthes sp. seed oil. Only acts on saturated fatty acids. This Limnanthes douglasii (Douglas' meadowfoam) protein is Icosanoyl-CoA 5-desaturase.